A 317-amino-acid chain; its full sequence is MTGRAFAIPLRTRFRGITVREGMLVRGAAGWGEFSPFAEYGPRECARWWAACYEAAELGWPAPVRDTVPVNATVPAVGPEEAARIVASSGCTTAKVKVAERGQSEANDVARVEAVRDALGPRGRVRIDVNGAWDVDTAVRMIRLLDRFELEYVEQPCATVDELAEVRRRVSVPIAADESIRRAEDPLRVRDAEAADVVVLKVQPLGGVRAALRLAEECGLPVVVSSAVETSVGLAAGVALAAALPELPYACGLATLRLLHADVCDDPLLPVHGVLPVRRVDVSEQRLAEVEIDPAAWQARLAAARAAWEQVEREPGP.

2-succinylbenzoate is bound by residues 71-73 (NAT) and K95. The active-site Proton donor is the K97. Residues D128, E154, and D177 each coordinate Mg(2+). 128-130 (DVN) provides a ligand contact to 2-succinylbenzoate. Residue K201 participates in 2-succinylbenzoate binding. The Proton acceptor role is filled by K201.

This sequence belongs to the mandelate racemase/muconate lactonizing enzyme family. MenC type 1 subfamily. In terms of assembly, monomer. A divalent metal cation is required as a cofactor.

It carries out the reaction (1R,6R)-6-hydroxy-2-succinyl-cyclohexa-2,4-diene-1-carboxylate = 2-succinylbenzoate + H2O. It participates in quinol/quinone metabolism; 1,4-dihydroxy-2-naphthoate biosynthesis; 1,4-dihydroxy-2-naphthoate from chorismate: step 4/7. It functions in the pathway quinol/quinone metabolism; menaquinone biosynthesis. Converts 2-succinyl-6-hydroxy-2,4-cyclohexadiene-1-carboxylate (SHCHC) to 2-succinylbenzoate (OSB). Does not show N-succinylamino acid racemase (NSAR) activity with N-succinyl-L-phenylglycine as substrate. The sequence is that of o-succinylbenzoate synthase from Thermobifida fusca (strain YX).